An 80-amino-acid polypeptide reads, in one-letter code: Conotoxin Bt6.5 (80 aa).

A signal peptide spans 1–22 (MKLTCVLIIAVLFLTACQLATA). The propeptide occupies 23–45 (KTYSTGRQKHRALRSTDKNIKLS). 3 disulfide bridges follow: Cys48/Cys62, Cys55/Cys66, and Cys61/Cys73.

It belongs to the conotoxin O1 superfamily. Expressed by the venom duct.

The protein localises to the secreted. When injected intracranially in mice, induces a series of symptoms such as quivering, climbing, scratching, barrel rolling and paralysis of limbs. Unexpectedly, no effect is observed on ionic currents when tested on locust DUM neuron. This chain is Conotoxin Bt6.5, found in Conus betulinus (Beech cone).